A 344-amino-acid polypeptide reads, in one-letter code: MDIFREIASSTKGENVFISPATISSVLTILYYGANGSTAEQLSKYVEKEETMDKVSAQNISFKSMNKVYGRYSAVFKNSFLGKIGDNFQTVDFTDCRTIDAINKCVDVFTEGKINPLLTEQLSPNTCLLAISAVYFKAKWLIPFKKEFTSDYPFYVSPTEMVDVSMMSMYGESFNYASVKESFGNFSIIELPYVGNTSMMVILPDKIDGLESIKQNLTDTNFKKWCNSLEATFIDVHIPKFKVTGSYNLVDTLVKLGLTDVFYSTGDYSNMCNSDVSVDAMIHKTYIDVNEEYTEAAAATSVLVADCASTVTNEFCADHPFIYVIRHVDGKILFVGRYCSPTTN.

The protein belongs to the serpin family. Poxviruses subfamily.

Its subcellular location is the host cytoplasm. Functionally, viral serpin that inhibits both cysteine and serine proteinases involved in the regulation of host inflammatory and apoptosis processes. Major anti-apoptotic protein which inhibits both intrinsic and extrinsic pathways and strongly cleaves host CASP1 and CASP8 but is a rather poor inhibitor of host CASP3. Prevents the proteolytic activity of host interleukin-1-beta converting enzyme (ICE) and ICE-like enzymes. Can also block apoptosis through host tumor necrosis factor (TNF) receptor. The inhibition of host ICE is an example of a 'cross-class' interaction, in which a serpin inhibits a non-serine proteinase. Also inhibits granzyme B. In Homo sapiens (Human), this protein is Serine proteinase inhibitor 2 (OPG199).